The primary structure comprises 180 residues: Magnetosome protein MamS (180 aa).

Residues 1–21 (MDFRPDQVVARIRGAVEGALT) are Cytoplasmic-facing. Residues 22-42 (AQSVLGIGGALVLILVVIALL) traverse the membrane as a helical segment. The Lumenal portion of the chain corresponds to 43 to 180 (PDRFTRGEGK…EGLALWMTVQ (138 aa)).

This sequence belongs to the magnetosome MamS family.

The protein resides in the magnetosome membrane. In terms of biological role, may play a role in magnetite crystal growth and size. The sequence is that of Magnetosome protein MamS from Magnetospirillum gryphiswaldense (strain DSM 6361 / JCM 21280 / NBRC 15271 / MSR-1).